The primary structure comprises 197 residues: PPMTTETAHISVVSREGDAVVVTTTINYWFGSGLRSPSTGVILNDEMDDFSAHDIQNIYGVPPSKANFIVPGKRPQSSTCPSIFVNEGGDVVMAIGASGGTRITSSVSLTSMRVLWLGRNIKEAIDEPRLHHQLLPDEIEYEFKFPNEILEKLKAIGHKTKPAGAFGSLVVGIKRMKGGTLTANYDYRRGGSVDGFK.

The first 6 residues, 1–6, serve as a signal peptide directing secretion; that stretch reads PPMTTE.

Expressed by the venom gland.

The protein resides in the secreted. May act as a voltage-gated potassium channel inhibitor. Is highly similar to the subunit beta of SSD14 which, when complexed with subunit alpha, induces platelet aggregation and hemolysis. This is Scoloptoxin SSD20 from Scolopendra dehaani (Thai centipede).